A 449-amino-acid chain; its full sequence is Galactosyl transferase CpsE (449 aa).

The next 5 helical transmembrane spans lie at 5–22 (VVVYFSASLTLTLITPNF), 27–46 (DLLFVLLIHYIVFYLSDFYR), 59–78 (MVLKYSFYYIFISSSLFFIF), 88–107 (SFFTFIAMNSILLYLLNSFL), and 258–280 (FLDITGAIIGLLICGIVAIFLVP).

Belongs to the bacterial sugar transferase family.

It is found in the cell membrane. In terms of biological role, galactosyl transferase is essential for the assembly of the group B streptococci (GBS) type III capsular polysaccharide. May be involved in the formation of either or both galactosidic bonds by catalyzing the addition of galactose to an oligosaccharide precursor or to a lipid intermediate. Type III capsular polysaccharide consists of a linear backbone with short side chains ending in residues of N-acetylneuraminic acid or sialic acid. The presence of sialic acid on the surface of the organism inhibits activation of the alternative pathway of complement and is thought to be an important element in the virulence function of the capsule. The protein is Galactosyl transferase CpsE (cpsE) of Streptococcus agalactiae serotype III (strain NEM316).